A 642-amino-acid chain; its full sequence is Mini-chromosome maintenance complex-binding protein (642 aa).

A compositionally biased stretch (polar residues) spans 151–161 (ARVSPSTSYTP). The interval 151–200 (ARVSPSTSYTPSRHKRSYEDDEDMDLQPNKQKDQHSGARQAGGLGGLHWR) is disordered. Serine 154 bears the Phosphoserine mark. Threonine 160 carries the phosphothreonine modification. Phosphoserine is present on residues serine 167 and serine 298.

This sequence belongs to the MCMBP family. In terms of assembly, interacts with the MCM complex: associates with the MCM3-7 complex which lacks MCM2, while it does not interact with the MCM complex when MCM2 is present (MCM2-7 complex). Interacts with the RPA complex, when composed of all RPA1, RPA2 and RPA3 components, but not with RPA1 or RPA2 alone.

It localises to the nucleus. Functionally, associated component of the MCM complex that acts as a regulator of DNA replication. Binds to the MCM complex during late S phase and promotes the disassembly of the MCM complex from chromatin, thereby acting as a key regulator of pre-replication complex (pre-RC) unloading from replicated DNA. Can dissociate the MCM complex without addition of ATP; probably acts by destabilizing interactions of each individual subunits of the MCM complex. Required for sister chromatid cohesion. This chain is Mini-chromosome maintenance complex-binding protein (Mcmbp), found in Rattus norvegicus (Rat).